Here is a 558-residue protein sequence, read N- to C-terminus: Transcription termination factor MTEF18, mitochondrial (558 aa).

The transit peptide at 1–58 (MFMVRLKFASISHNFSTVAAKHRRVPSKYKSLAIGKAQQAITDYLHTTRSLSYTHAEQ) directs the protein to the mitochondrion.

It belongs to the mTERF family.

It localises to the mitochondrion. Functionally, transcription termination factor involved in the regulation of mitochondrial-encoded gene expression. Essential for normal plant growth and development. The sequence is that of Transcription termination factor MTEF18, mitochondrial from Arabidopsis thaliana (Mouse-ear cress).